Here is a 150-residue protein sequence, read N- to C-terminus: Putative transmembrane protein DDB_G0277665 (150 aa).

The next 2 helical transmembrane spans lie at 4-24 and 42-62; these read TLIIIIVSVIVGYLISHFNIL and VIVGAIVGQALIYFFVFFLPL.

The protein resides in the membrane. The sequence is that of Putative transmembrane protein DDB_G0277665 from Dictyostelium discoideum (Social amoeba).